A 388-amino-acid chain; its full sequence is Nitric oxide reductase FlRd-NAD(+) reductase (388 aa).

This sequence belongs to the FAD-dependent oxidoreductase family. The cofactor is FAD.

It localises to the cytoplasm. The enzyme catalyses 2 reduced [nitric oxide reductase rubredoxin domain] + NAD(+) + H(+) = 2 oxidized [nitric oxide reductase rubredoxin domain] + NADH. It functions in the pathway nitrogen metabolism; nitric oxide reduction. In terms of biological role, one of at least two accessory proteins for anaerobic nitric oxide (NO) reductase. Reduces the rubredoxin moiety of NO reductase. The protein is Nitric oxide reductase FlRd-NAD(+) reductase of Aeromonas salmonicida (strain A449).